We begin with the raw amino-acid sequence, 613 residues long: Transcription factor Sp2 (613 aa).

The segment at Met1 to Pro32 is disordered. The span at Ala23–Pro32 shows a compositional bias: polar residues. Ser78 is modified (phosphoserine). Residues Thr225–Ser235 show a composition bias toward polar residues. The segment at Thr225 to Pro258 is disordered. A 9aaTAD; inactive motif is present at residues Gly361–Gln369. A compositionally biased stretch (low complexity) spans Pro372 to Ser389. The segment at Pro372 to Ala404 is disordered. 3 C2H2-type zinc fingers span residues His525 to His549, Phe555 to His579, and Phe585 to His607.

The protein belongs to the Sp1 C2H2-type zinc-finger protein family.

It localises to the nucleus. Its function is as follows. Binds to GC box promoters elements and selectively activates mRNA synthesis from genes that contain functional recognition sites. The polypeptide is Transcription factor Sp2 (SP2) (Homo sapiens (Human)).